The primary structure comprises 85 residues: Phosphocarrier protein HPr (85 aa).

Residues 1 to 85 (MFQQEVTITA…HLVKLMAELE (85 aa)) form the HPr domain. The Pros-phosphohistidine intermediate role is filled by His-15.

It belongs to the HPr family.

Its subcellular location is the cytoplasm. In terms of biological role, general (non sugar-specific) component of the phosphoenolpyruvate-dependent sugar phosphotransferase system (sugar PTS). This major carbohydrate active-transport system catalyzes the phosphorylation of incoming sugar substrates concomitantly with their translocation across the cell membrane. The phosphoryl group from phosphoenolpyruvate (PEP) is transferred to the phosphoryl carrier protein HPr by enzyme I. Phospho-HPr then transfers it to the PTS EIIA domain. In Escherichia coli O157:H7, this protein is Phosphocarrier protein HPr (ptsH).